Reading from the N-terminus, the 310-residue chain is AMMECR1-like protein (310 aa).

The disordered stretch occupies residues 26–92; sequence LSGSGTHSHG…SGALSPLPRP (67 aa). 2 stretches are compositionally biased toward polar residues: residues 28 to 66 and 74 to 84; these read GSGT…NVSD and SPITRMNTASG. Serine 74 bears the Phosphoserine mark. Residues 97 to 291 form the AMMECR1 domain; the sequence is NSTKNLVVTA…ISYAEYIASR (195 aa).

In Mus musculus (Mouse), this protein is AMMECR1-like protein (Ammecr1l).